We begin with the raw amino-acid sequence, 236 residues long: Ubiquinone biosynthesis O-methyltransferase (236 aa).

4 residues coordinate S-adenosyl-L-methionine: Arg-40, Gly-59, Asp-80, and Leu-124.

Belongs to the methyltransferase superfamily. UbiG/COQ3 family.

It carries out the reaction a 3-demethylubiquinol + S-adenosyl-L-methionine = a ubiquinol + S-adenosyl-L-homocysteine + H(+). It catalyses the reaction a 3-(all-trans-polyprenyl)benzene-1,2-diol + S-adenosyl-L-methionine = a 2-methoxy-6-(all-trans-polyprenyl)phenol + S-adenosyl-L-homocysteine + H(+). The protein operates within cofactor biosynthesis; ubiquinone biosynthesis. O-methyltransferase that catalyzes the 2 O-methylation steps in the ubiquinone biosynthetic pathway. This is Ubiquinone biosynthesis O-methyltransferase from Saccharophagus degradans (strain 2-40 / ATCC 43961 / DSM 17024).